The chain runs to 258 residues: Glycerol-3-phosphate acyltransferase (258 aa).

The next 6 helical transmembrane spans lie at 11 to 31 (IILASVIGYFLGSISWSIIIV), 62 to 82 (LVVAFLDALKVVFTAIVAILL), 94 to 114 (SYFIPCIFALIGHCYPIYYKF), 124 to 144 (LGLLFVVNVLYLIIFLIIWFI), 160 to 180 (ALIILLIMWIPYLSGVSYFIW), and 212 to 232 (WASGILEGNIIILIGGLILAW).

It belongs to the PlsY family. Probably interacts with PlsX.

It is found in the cell membrane. It catalyses the reaction an acyl phosphate + sn-glycerol 3-phosphate = a 1-acyl-sn-glycero-3-phosphate + phosphate. Its pathway is lipid metabolism; phospholipid metabolism. In terms of biological role, catalyzes the transfer of an acyl group from acyl-phosphate (acyl-PO(4)) to glycerol-3-phosphate (G3P) to form lysophosphatidic acid (LPA). This enzyme utilizes acyl-phosphate as fatty acyl donor, but not acyl-CoA or acyl-ACP. The protein is Glycerol-3-phosphate acyltransferase of Mycoplasma mycoides subsp. mycoides SC (strain CCUG 32753 / NCTC 10114 / PG1).